Reading from the N-terminus, the 979-residue chain is MATQAYTELQAAPPPSQPPQAPPQAQPQPPPPPPPAAPQPPQPPTAAATPQPQYVTELQSPQPQAQPPGGQKQYVTELPAVPAPSQPTGAPTPSPAPQQYIVVTVSEGAMRASETVSEASPGSTASQTGVPTQVVQQVQGTQQRLLVQTSVQAKPGHVSPLQLTNIQVPQQALPTQRLVVQSAAPGSKGGQVSLTVHGTQQVHSPPEQSPVQANSSSSKTAGAPTGTVPQQLQVHGVQQSVPVTQERSVVQATPQAPKPGPVQPLTVQGLQPVHVAQEVQQLQQVPVPHVYSSQVQYVEGGDASYTASAIRSSTYSYPETPLYTQTASTSYYEAAGTATQVSTPATSQAVASSGSMPMYVSGSQVVASSTSTGAGASNSSGGGGSGGGGGGGGGGGGGGSGSTGGGGSGAGTYVIQGGYMLGSASQSYSHTTRASPATVQWLLDNYETAEGVSLPRSTLYCHYLLHCQEQKLEPVNAASFGKLIRSVFMGLRTRRLGTRGNSKYHYYGLRIKASSPLLRLMEDQQHMAMRGQPFSQKQRLKPIQKMEGMTNGVAVGQQPSTGLSDISAQVQQYQQFLDASRSLPDFTELDLQGKVLPEGVGPGDIKAFQVLYREHCEAIVDVMVNLQFTLVETLWKTFWRYNLSQPSEAPPLAVHDEAEKRLPKAILVLLSKFEPVLQWTKHCDNVLYQGLVEILIPDVLRPIPSALTQAIRNFAKSLESWLTHAMVNIPEEMLRVKVAAAGAFAQTLRRYTSLNHLAQAARAVLQNTAQINQMLSDLNRVDFANVQEQASWVCRCEDRVVQRLEQDFKVTLQQQNSLEQWAAWLDGVVSQVLKPYQGSAGFPKAAKLFLLKWSFYSSMVIRDLTLRSAASFGSFHLIRLLYDEYMYYLIEHRVAQAKGETPIAVMGEFANLATSLNPLDPDKDEEEEEEEESEDELPQDISLAAGGESPALGPETLEPPAKLARTDARGLFVQALPSS.

Disordered regions lie at residues 1–136 (MATQ…QVVQ), 181–227 (QSAA…PTGT), and 370–405 (TSTG…STGG). Positions 12-44 (APPPSQPPQAPPQAQPQPPPPPPPAAPQPPQPP) are enriched in pro residues. A compositionally biased stretch (low complexity) spans 45-73 (TAAATPQPQYVTELQSPQPQAQPPGGQKQ). Ser-60 carries the phosphoserine modification. A compositionally biased stretch (pro residues) spans 81 to 96 (VPAPSQPTGAPTPSPA). The span at 114–126 (ETVSEASPGSTAS) shows a compositional bias: polar residues. Residues 127-136 (QTGVPTQVVQ) show a composition bias toward low complexity. 2 stretches are compositionally biased toward polar residues: residues 190–203 (GQVS…QQVH) and 209–220 (SPVQANSSSSKT). Residues 370-379 (TSTGAGASNS) are compositionally biased toward low complexity. The span at 380 to 405 (SGGGGSGGGGGGGGGGGGGGSGSTGG) shows a compositional bias: gly residues. The RFX-type winged-helix DNA-binding region spans 438–513 (TVQWLLDNYE…YHYYGLRIKA (76 aa)). Residues 744 to 979 (FAQTLRRYTS…GLFVQALPSS (236 aa)) are necessary for dimerization. The disordered stretch occupies residues 915–960 (SLNPLDPDKDEEEEEEEESEDELPQDISLAAGGESPALGPETLEPP). The segment covering 922-938 (DKDEEEEEEEESEDELP) has biased composition (acidic residues). Residues Ser-978 and Ser-979 each carry the phosphoserine modification.

The protein belongs to the RFX family. In terms of assembly, homodimer; binds DNA as a homodimer. Heterodimer; heterodimerizes with RFX2 and RFX3.

It localises to the nucleus. Its function is as follows. Regulatory factor essential for MHC class II genes expression. Binds to the X boxes of MHC class II genes. Also binds to an inverted repeat (ENH1) required for hepatitis B virus genes expression and to the most upstream element (alpha) of the RPL30 promoter. The chain is MHC class II regulatory factor RFX1 (RFX1) from Homo sapiens (Human).